We begin with the raw amino-acid sequence, 161 residues long: Putative 4-hydroxy-4-methyl-2-oxoglutarate aldolase (161 aa).

Residues 75 to 78 and arginine 97 contribute to the substrate site; that span reads GDNL. Residue aspartate 98 coordinates a divalent metal cation.

This sequence belongs to the class II aldolase/RraA-like family. Homotrimer. It depends on a divalent metal cation as a cofactor.

The catalysed reaction is 4-hydroxy-4-methyl-2-oxoglutarate = 2 pyruvate. The enzyme catalyses oxaloacetate + H(+) = pyruvate + CO2. In terms of biological role, catalyzes the aldol cleavage of 4-hydroxy-4-methyl-2-oxoglutarate (HMG) into 2 molecules of pyruvate. Also contains a secondary oxaloacetate (OAA) decarboxylase activity due to the common pyruvate enolate transition state formed following C-C bond cleavage in the retro-aldol and decarboxylation reactions. This chain is Putative 4-hydroxy-4-methyl-2-oxoglutarate aldolase, found in Alkalilimnicola ehrlichii (strain ATCC BAA-1101 / DSM 17681 / MLHE-1).